The following is a 55-amino-acid chain: MAVPKKKTSKAKRDQRRAHWKRKATIEAQKALSLGKSVLTGRSSFVYPSPEDDEE.

The segment covering 1–23 (MAVPKKKTSKAKRDQRRAHWKRK) has biased composition (basic residues). Residues 1–26 (MAVPKKKTSKAKRDQRRAHWKRKATI) form a disordered region.

This sequence belongs to the bacterial ribosomal protein bL32 family.

This is Large ribosomal subunit protein bL32 from Picosynechococcus sp. (strain ATCC 27264 / PCC 7002 / PR-6) (Agmenellum quadruplicatum).